The sequence spans 548 residues: Membrane protein insertase YidC (548 aa).

Residues 6 to 26 traverse the membrane as a helical segment; sequence NLLVIALLFVSFMIWQAWEQD. Residues 28–54 form a disordered region; it reads NPQPQTQQTTQTTTTAAGSAADQGVPA. A compositionally biased stretch (low complexity) spans 29 to 42; that stretch reads PQPQTQQTTQTTTT. The next 4 membrane-spanning stretches (helical) occupy residues 350-370, 424-444, 458-478, and 499-519; these read FLGNWGFSIIVITFIVRGIMY, FPLIIQMPIFLALYYMLMGSI, LSAQDPYYILPILMGVTMFFI, and PVIFTVFFLWFPSGLVLYYIV.

Belongs to the OXA1/ALB3/YidC family. Type 1 subfamily. In terms of assembly, interacts with the Sec translocase complex via SecD. Specifically interacts with transmembrane segments of nascent integral membrane proteins during membrane integration.

The protein resides in the cell inner membrane. Functionally, required for the insertion and/or proper folding and/or complex formation of integral membrane proteins into the membrane. Involved in integration of membrane proteins that insert both dependently and independently of the Sec translocase complex, as well as at least some lipoproteins. Aids folding of multispanning membrane proteins. The chain is Membrane protein insertase YidC from Citrobacter koseri (strain ATCC BAA-895 / CDC 4225-83 / SGSC4696).